Consider the following 72-residue polypeptide: SRY-related protein MG42 (72 aa).

The HMG box DNA-binding region spans 1–69; it reads VKRPMNAFMV…KHMADYPNYK (69 aa).

The protein resides in the nucleus. This Tarentola mauritanica (Common wall gecko) protein is SRY-related protein MG42.